The sequence spans 1249 residues: MQPLVLLLLFILCFSGLGQPGIINNDLQTLLEVKKSLVTNPQEDDPLRQWNSDNINYCSWTGVTCDNTGLFRVIALNLTGLGLTGSISPWFGRFDNLIHLDLSSNNLVGPIPTALSNLTSLESLFLFSNQLTGEIPSQLGSLVNIRSLRIGDNELVGDIPETLGNLVNLQMLALASCRLTGPIPSQLGRLVRVQSLILQDNYLEGPIPAELGNCSDLTVFTAAENMLNGTIPAELGRLENLEILNLANNSLTGEIPSQLGEMSQLQYLSLMANQLQGLIPKSLADLGNLQTLDLSANNLTGEIPEEFWNMSQLLDLVLANNHLSGSLPKSICSNNTNLEQLVLSGTQLSGEIPVELSKCQSLKQLDLSNNSLAGSIPEALFELVELTDLYLHNNTLEGTLSPSISNLTNLQWLVLYHNNLEGKLPKEISALRKLEVLFLYENRFSGEIPQEIGNCTSLKMIDMFGNHFEGEIPPSIGRLKELNLLHLRQNELVGGLPASLGNCHQLNILDLADNQLSGSIPSSFGFLKGLEQLMLYNNSLQGNLPDSLISLRNLTRINLSHNRLNGTIHPLCGSSSYLSFDVTNNGFEDEIPLELGNSQNLDRLRLGKNQLTGKIPWTLGKIRELSLLDMSSNALTGTIPLQLVLCKKLTHIDLNNNFLSGPIPPWLGKLSQLGELKLSSNQFVESLPTELFNCTKLLVLSLDGNSLNGSIPQEIGNLGALNVLNLDKNQFSGSLPQAMGKLSKLYELRLSRNSLTGEIPVEIGQLQDLQSALDLSYNNFTGDIPSTIGTLSKLETLDLSHNQLTGEVPGSVGDMKSLGYLNVSFNNLGGKLKKQFSRWPADSFLGNTGLCGSPLSRCNRVRSNNKQQGLSARSVVIISAISALTAIGLMILVIALFFKQRHDFFKKVGHGSTAYTSSSSSSQATHKPLFRNGASKSDIRWEDIMEATHNLSEEFMIGSGGSGKVYKAELENGETVAVKKILWKDDLMSNKSFSREVKTLGRIRHRHLVKLMGYCSSKSEGLNLLIYEYMKNGSIWDWLHEDKPVLEKKKKLLDWEARLRIAVGLAQGVEYLHHDCVPPIVHRDIKSSNVLLDSNMEAHLGDFGLAKVLTENCDTNTDSNTWFACSYGYIAPEYAYSLKATEKSDVYSMGIVLMEIVTGKMPTDSVFGAEMDMVRWVETHLEVAGSARDKLIDPKLKPLLPFEEDAACQVLEIALQCTKTSPQERPSSRQACDSLLHVYNNRTAGYKKL.

An N-terminal signal peptide occupies residues 1-18 (MQPLVLLLLFILCFSGLG). The Extracellular portion of the chain corresponds to 19 to 876 (QPGIINNDLQ…QQGLSARSVV (858 aa)). N-linked (GlcNAc...) asparagine glycosylation is found at asparagine 77 and asparagine 117. LRR repeat units follow at residues 94–118 (FDNL…LSNL), 119–142 (TSLE…LGSL), 144–166 (NIRS…LGNL), 168–190 (NLQM…LGRL), 191–214 (VRVQ…LGNC), 216–238 (DLTV…LGRL), 239–262 (ENLE…LGEM), 264–285 (QLQY…SLAD), 286–310 (LGNL…FWNM), 312–334 (QLLD…ICSN), 336–359 (TNLE…LSKC), 360–383 (QSLK…LFEL), 385–407 (ELTD…ISNL), 408–431 (TNLQ…ISAL), 433–455 (KLEV…IGNC), 457–479 (SLKM…IGRL), 480–503 (KELN…LGNC), 505–527 (QLNI…FGFL), 528–551 (KGLE…LISL), 553–574 (NLTR…LCGS), 576–598 (SYLS…LGNS), 599–622 (QNLD…LGKI), 623–646 (RELS…LVLC), 648–670 (KLTH…LGKL), 671–694 (SQLG…LFNC), 696–718 (KLLV…IGNL), 719–742 (GALN…MGKL), 744–766 (KLYE…IGQL), 767–791 (QDLQ…IGTL), 792–815 (SKLE…VGDM), and 817–838 (SLGY…QFSR). Asparagine 213, asparagine 228, and asparagine 248 each carry an N-linked (GlcNAc...) asparagine glycan. Asparagine 298, asparagine 309, and asparagine 334 each carry an N-linked (GlcNAc...) asparagine glycan. N-linked (GlcNAc...) asparagine glycans are attached at residues asparagine 369, asparagine 393, and asparagine 406. The N-linked (GlcNAc...) asparagine glycan is linked to asparagine 454. 4 N-linked (GlcNAc...) asparagine glycosylation sites follow: asparagine 537, asparagine 553, asparagine 558, and asparagine 565. Asparagine 693 and asparagine 708 each carry an N-linked (GlcNAc...) asparagine glycan. An N-linked (GlcNAc...) asparagine glycan is attached at asparagine 779. An N-linked (GlcNAc...) asparagine glycan is attached at asparagine 822. Residues 877–897 (IISAISALTAIGLMILVIALF) traverse the membrane as a helical segment. Over 898–1249 (FKQRHDFFKK…NNRTAGYKKL (352 aa)) the chain is Cytoplasmic. Phosphothreonine is present on threonine 948. A Protein kinase domain is found at 951–1240 (LSEEFMIGSG…ACDSLLHVYN (290 aa)). Residues 957 to 965 (IGSGGSGKV) and lysine 979 each bind ATP. A phosphotyrosine mark is found at tyrosine 1027 and tyrosine 1071. The active-site Proton acceptor is the aspartate 1084. Tyrosine 1129 and tyrosine 1136 each carry phosphotyrosine.

The protein belongs to the protein kinase superfamily. Ser/Thr protein kinase family. Interacts with CIF1 and CIF2. Mostly expressed in siliques, seeds, developing embryos and seedlings, detected in flower buds and roots, but not in leaves or stems.

It localises to the cell membrane. The catalysed reaction is L-seryl-[protein] + ATP = O-phospho-L-seryl-[protein] + ADP + H(+). The enzyme catalyses L-threonyl-[protein] + ATP = O-phospho-L-threonyl-[protein] + ADP + H(+). In terms of biological role, together with GSO2, receptor-like serine/threonine-kinase required during the development of the epidermal surface in embryos and cotyledons. In coordination with GSO2, regulates root growth through control of cell division and cell fate specification. Controls seedling root growth by modulating sucrose response after germination. Receptor of the peptide hormones CIF1 and CIF2 required for contiguous Casparian strip diffusion barrier formation in roots. Required for localizing CASP proteins into the Casparian strip following an uninterrupted, ring-like domain, to trigger endodermal differentiation and thus regulate potassium ion (K) homeostasis. Involved in the maintenance of water transport and root pressure. May also be involved in the regulation of suberin accumulation in the endodermis. The protein is LRR receptor-like serine/threonine-protein kinase GSO1 of Arabidopsis thaliana (Mouse-ear cress).